Reading from the N-terminus, the 426-residue chain is Docking protein 3 (426 aa).

Residues 4 to 115 (PVKDGIIYVQ…WIEQLCQLAF (112 aa)) form the PH domain. One can recognise an IRS-type PTB domain in the interval 145 to 249 (DLTEFPVLVL…ACQQQGQESP (105 aa)). The segment at 243-282 (QQGQESPQPSAQGLSNQPWGAEAEDPQCSPTLGRAHSGSH) is disordered. The segment covering 247-260 (ESPQPSAQGLSNQP) has biased composition (polar residues). Tyrosine 331 carries the phosphotyrosine modification. Residues 357 to 426 (GCRQAPEGHS…RDGPGARDWS (70 aa)) form a disordered region. The segment covering 402–411 (KPQRTLRAKL) has biased composition (basic residues).

It belongs to the DOK family. Type A subfamily. Homooligomer. Interacts with GRB2 and INPP5D/SHIP. Tyrosine-phosphorylated in the presence of GRB2.

It is found in the cytoplasm. Its subcellular location is the cell membrane. In terms of biological role, DOK proteins are enzymatically inert adaptor or scaffolding proteins. They provide a docking platform for the assembly of multimolecular signaling complexes. Plays a role as negative regulator of the mobilization of calcium ions and of calcium signaling. The sequence is that of Docking protein 3 (DOK3) from Gallus gallus (Chicken).